A 689-amino-acid chain; its full sequence is Transketolase (689 aa).

H56 contributes to the substrate binding site. Thiamine diphosphate is bound by residues H96 and 144–146; that span reads GNL. Residue D185 coordinates Mg(2+). The thiamine diphosphate site is built by G186 and N215. Mg(2+) is bound by residues N215 and I217. Residues H289, R380, and S407 each coordinate substrate. Position 289 (H289) interacts with thiamine diphosphate. The active-site Proton donor is the E434. Residue F460 coordinates thiamine diphosphate. Residues H484, D492, and R543 each contribute to the substrate site.

It belongs to the transketolase family. As to quaternary structure, homodimer. The cofactor is Mg(2+). It depends on Ca(2+) as a cofactor. Requires Mn(2+) as cofactor. Co(2+) is required as a cofactor. Thiamine diphosphate serves as cofactor.

It catalyses the reaction D-sedoheptulose 7-phosphate + D-glyceraldehyde 3-phosphate = aldehydo-D-ribose 5-phosphate + D-xylulose 5-phosphate. Catalyzes the transfer of a two-carbon ketol group from a ketose donor to an aldose acceptor, via a covalent intermediate with the cofactor thiamine pyrophosphate. The protein is Transketolase (tkt) of Aquifex aeolicus (strain VF5).